We begin with the raw amino-acid sequence, 43 residues long: Lanthionine-containing peptide SapB (43 aa).

The N-terminal stretch at 1–21 (MALLDLQAMDTPAEDSFGELA) is a signal peptide. Cross-links (lanthionine (Ser-Cys)) lie at residues 24–31 (SQVSLLVC) and 34–41 (SSLSVVLC). 2 positions are modified to 2,3-didehydroalanine (Ser): Ser27 and Ser37.

The protein belongs to the lanthionine-containing morphogen protein family. In terms of processing, maturation involves the enzymatic conversion of Ser into dehydrated AA and the formation of thioether bonds with cysteine. This is followed by membrane translocation and cleavage of the modified precursor.

Lanthionine-containing peptide devoid of antibiotic properties, involved in the formation of aerial mycelium. Suggested to self-assemble at air-water interfaces, thus providing a film of surfactant through which nascent aerial hyphae can emerge. The aerial hyphae differentiate further into spores. The chain is Lanthionine-containing peptide SapB (ramS) from Streptomyces griseus subsp. griseus (strain JCM 4626 / CBS 651.72 / NBRC 13350 / KCC S-0626 / ISP 5235).